A 404-amino-acid chain; its full sequence is Cysteine desulfurase IscS (404 aa).

Pyridoxal 5'-phosphate is bound by residues 75–76 (AT), Asn-155, Gln-183, and 203–205 (SAH). Lys-206 carries the post-translational modification N6-(pyridoxal phosphate)lysine. Thr-243 is a binding site for pyridoxal 5'-phosphate. The active-site Cysteine persulfide intermediate is Cys-328. Cys-328 serves as a coordination point for [2Fe-2S] cluster.

This sequence belongs to the class-V pyridoxal-phosphate-dependent aminotransferase family. NifS/IscS subfamily. In terms of assembly, homodimer. Forms a heterotetramer with IscU, interacts with other sulfur acceptors. Pyridoxal 5'-phosphate serves as cofactor.

Its subcellular location is the cytoplasm. The enzyme catalyses (sulfur carrier)-H + L-cysteine = (sulfur carrier)-SH + L-alanine. Its pathway is cofactor biosynthesis; iron-sulfur cluster biosynthesis. In terms of biological role, master enzyme that delivers sulfur to a number of partners involved in Fe-S cluster assembly, tRNA modification or cofactor biosynthesis. Catalyzes the removal of elemental sulfur atoms from cysteine to produce alanine. Functions as a sulfur delivery protein for Fe-S cluster synthesis onto IscU, an Fe-S scaffold assembly protein, as well as other S acceptor proteins. The protein is Cysteine desulfurase IscS of Pseudomonas fluorescens (strain Pf0-1).